Here is a 527-residue protein sequence, read N- to C-terminus: Probable malate:quinone oxidoreductase 2 (527 aa).

Belongs to the MQO family. FAD serves as cofactor.

It carries out the reaction (S)-malate + a quinone = a quinol + oxaloacetate. Its pathway is carbohydrate metabolism; tricarboxylic acid cycle; oxaloacetate from (S)-malate (quinone route): step 1/1. In Pseudomonas putida (strain ATCC 47054 / DSM 6125 / CFBP 8728 / NCIMB 11950 / KT2440), this protein is Probable malate:quinone oxidoreductase 2.